Here is a 295-residue protein sequence, read N- to C-terminus: G1/S-specific cyclin-D1 (295 aa).

The region spanning 28 to 152 (LRAMLKAEET…VLVNKLKWNL (125 aa)) is the Cyclin N-terminal domain. Residues 264–295 (QQNLDPKAAEEEEEEEEVDLACTPTDVRDVNI) form a disordered region. Lys-270 is covalently cross-linked (Glycyl lysine isopeptide (Lys-Gly) (interchain with G-Cter in ubiquitin)). Acidic residues predominate over residues 273–282 (EEEEEEEEVD). Phosphothreonine is present on Thr-286.

It belongs to the cyclin family. Cyclin D subfamily. Interacts with either CDK4 or CDK6 protein kinase to form a serine/threonine kinase holoenzyme complex. The cyclin subunit imparts substrate specificity to the complex. Component of the ternary complex CCND1/CDK4/CDKN1B required for nuclear translocation and modulation of CDK4-mediated kinase activity. Interacts directly with CDKN1B. Can form similar complexes with either CDKN1A or CDKN2A. Interacts with UHRF2; the interaction ubiquitinates CCND1 and appears to occur independently of phosphorylation. Interacts with USP2. Interacts (via cyclin N-terminal domain) with INSM1 (via N-terminal region); the interaction competes with the binding of CCND1 to CDK4 during cell cycle progression and inhibits CDK4 activity. Interacts with CDK4; the interaction is prevented with the binding of CCND1 to INSM1 during cell cycle progression. Phosphorylation at Thr-286 by MAP kinases is required for ubiquitination and degradation by the DCX(AMBRA1) complex. It also plays an essential role for recognition by the FBXO31 component of SCF (SKP1-cullin-F-box) protein ligase complex following DNA damage. In terms of processing, ubiquitinated at Lys-270 by the DCX(AMBRA1) complex during the transition from G1 to S cell phase, leading to its degradation: ubiquitination is dependent on Thr-286 phosphorylation. The DCX(AMBRA1) complex represents the major regulator of CCND1 stability during the G1/S transition. Also ubiquitinated by the SCF(FBXO4) and Cul7-RING(FBXW8) ubiquitin-protein ligase complexes. Following DNA damage it is ubiquitinated by the SCF(FBXO31) protein ligase complex. SCF(FBXO31) ubiquitination is dependent on Thr-286 phosphorylation. Ubiquitinated also by UHRF2 apparently in a phosphorylation-independent manner. Ubiquitination leads to its degradation and G1 arrest. Deubiquitinated by USP2; leading to its stabilization.

The protein localises to the nucleus. It is found in the cytoplasm. Its subcellular location is the nucleus membrane. Functionally, regulatory component of the cyclin D1-CDK4 (DC) complex that phosphorylates and inhibits members of the retinoblastoma (RB) protein family including RB1 and regulates the cell-cycle during G(1)/S transition. Phosphorylation of RB1 allows dissociation of the transcription factor E2F from the RB/E2F complex and the subsequent transcription of E2F target genes which are responsible for the progression through the G(1) phase. Hypophosphorylates RB1 in early G(1) phase. Cyclin D-CDK4 complexes are major integrators of various mitogenenic and antimitogenic signals. Also a substrate for SMAD3, phosphorylating SMAD3 in a cell-cycle-dependent manner and repressing its transcriptional activity. Component of the ternary complex, cyclin D1/CDK4/CDKN1B, required for nuclear translocation and activity of the cyclin D-CDK4 complex. Exhibits transcriptional corepressor activity with INSM1 on the NEUROD1 and INS promoters in a cell cycle-independent manner. The sequence is that of G1/S-specific cyclin-D1 (CCND1) from Bos taurus (Bovine).